The chain runs to 308 residues: Ribonuclease HIII (308 aa).

One can recognise an RNase H type-2 domain in the interval 91–308 (KNVIGSDEVG…TEKALKMVKK (218 aa)). A divalent metal cation is bound by residues Asp97, Glu98, and Asp202.

Belongs to the RNase HII family. RnhC subfamily. Requires Mn(2+) as cofactor. It depends on Mg(2+) as a cofactor.

The protein resides in the cytoplasm. It carries out the reaction Endonucleolytic cleavage to 5'-phosphomonoester.. Endonuclease that specifically degrades the RNA of RNA-DNA hybrids. In Listeria monocytogenes serotype 4b (strain F2365), this protein is Ribonuclease HIII.